The chain runs to 1146 residues: Sodium/hydrogen exchanger 7 (1146 aa).

Residues 1 to 28 are Extracellular-facing; sequence MTTVIDATMAYRFLEEATDSSSSSSSSK. A helical transmembrane segment spans residues 29-49; the sequence is LESSPVDAVLFVGMSLVLGIA. The Cytoplasmic portion of the chain corresponds to 50–58; that stretch reads SRHLLRGTR. A helical transmembrane segment spans residues 59–79; it reads VPYTVALLVIGIALGSLEYGA. The Extracellular portion of the chain corresponds to 80–99; sequence KHNLGKIGHGIRIWNEIDPE. Residues 100 to 120 traverse the membrane as a helical segment; the sequence is LLLAVFLPALLFESSFSMEVH. Residues 121–127 lie on the Cytoplasmic side of the membrane; that stretch reads QIKRCLG. The helical transmembrane segment at 128–148 threads the bilayer; the sequence is QMVLLAVPGVLISTACLGSLV. Topologically, residues 149–159 are extracellular; that stretch reads KVTFPYEWDWK. The helical transmembrane segment at 160–180 threads the bilayer; it reads TSLLLGGLLSATDPVAVVALL. At 181–191 the chain is on the cytoplasmic side; it reads KELGASKKLST. A helical membrane pass occupies residues 192–212; that stretch reads IIEGESLMNDGTAIVVFQLFL. Residues 213–227 are Extracellular-facing; it reads KMAMGQNSDWSSIIK. Residues 228-250 traverse the membrane as a helical segment; the sequence is FLLKVALGAVGIGLAFGIASVIW. Over 251–253 the chain is Cytoplasmic; the sequence is LKF. The helical transmembrane segment at 254–273 threads the bilayer; that stretch reads IFNDTVIEITLTIAVSYFAY. Topologically, residues 274–278 are extracellular; the sequence is YTAQE. A helical transmembrane segment spans residues 279 to 299; the sequence is WAGASGVLTVMTLGMFYAAFA. The Cytoplasmic portion of the chain corresponds to 300-313; it reads RTAFKGDSQKSLHH. A helical transmembrane segment spans residues 314–334; that stretch reads FWEMVAYIANTLIFILSGVVI. The Extracellular portion of the chain corresponds to 335–352; sequence AEGILDSDKIAYQGNSWR. A helical transmembrane segment spans residues 353 to 373; the sequence is FLFLLYVYIQLSRVVVVGVLY. Residues 374 to 387 lie on the Cytoplasmic side of the membrane; it reads PLLCRFGYGLDWKE. The chain crosses the membrane as a helical span at residues 388 to 408; sequence SIILVWSGLRGAVALALSLSV. Topologically, residues 409–420 are extracellular; the sequence is KQSSGNSHISKE. A helical membrane pass occupies residues 421-441; that stretch reads TGTLFLFFTGGIVFLTLIVNG. Residues 442–1146 are Cytoplasmic-facing; the sequence is STTQFVLRLL…PSKIVFRNDL (705 aa). Disordered stretches follow at residues 981–1001 and 1102–1128; these read LHRRPSSLTPPRSSSSDQLQR and CQLPLKGESSTRQNTMVESSDEEDEDE. A compositionally biased stretch (low complexity) spans 986–996; it reads SSLTPPRSSSS. Polar residues predominate over residues 1109–1118; sequence ESSTRQNTMV.

It belongs to the monovalent cation:proton antiporter 1 (CPA1) transporter (TC 2.A.36) family. In terms of assembly, interacts with CIPK24/SOS2 and CBL4/SOS3. In terms of processing, phosphorylated by CIPK24/SOS2 in complex with CBL4/SOS3. More expressed in roots than in shoots. Mostly localized in parenchyma cells at the xylem/symplast boundary in roots, hypocotyls, stems and leaves. Also present in root tips epidermal cells.

It localises to the cell membrane. It carries out the reaction Na(+)(in) + H(+)(out) = Na(+)(out) + H(+)(in). It catalyses the reaction K(+)(in) + H(+)(out) = K(+)(out) + H(+)(in). Functionally, acts in electroneutral exchange of protons for cations such as Na(+) or Li(+) across plasma membrane. Involved in Na(+) and K(+) homeostasis. Required for cytoplasmic Na(+) and Li(+) detoxification by secreting them from the cytoplasm to the extracellular space. Regulates Na(+) content of the xylem sap. The chain is Sodium/hydrogen exchanger 7 (NHX7) from Arabidopsis thaliana (Mouse-ear cress).